We begin with the raw amino-acid sequence, 373 residues long: Anhydro-N-acetylmuramic acid kinase (373 aa).

12-19 provides a ligand contact to ATP; the sequence is GTSLDGVD.

This sequence belongs to the anhydro-N-acetylmuramic acid kinase family.

It catalyses the reaction 1,6-anhydro-N-acetyl-beta-muramate + ATP + H2O = N-acetyl-D-muramate 6-phosphate + ADP + H(+). It participates in amino-sugar metabolism; 1,6-anhydro-N-acetylmuramate degradation. The protein operates within cell wall biogenesis; peptidoglycan recycling. In terms of biological role, catalyzes the specific phosphorylation of 1,6-anhydro-N-acetylmuramic acid (anhMurNAc) with the simultaneous cleavage of the 1,6-anhydro ring, generating MurNAc-6-P. Is required for the utilization of anhMurNAc either imported from the medium or derived from its own cell wall murein, and thus plays a role in cell wall recycling. The chain is Anhydro-N-acetylmuramic acid kinase from Salmonella newport (strain SL254).